A 292-amino-acid polypeptide reads, in one-letter code: NAD kinase (292 aa).

Aspartate 73 serves as the catalytic Proton acceptor. NAD(+)-binding positions include 73–74 (DG), 147–148 (NE), histidine 158, arginine 175, aspartate 177, 188–193 (TAYSLS), and glutamine 247.

This sequence belongs to the NAD kinase family. Requires a divalent metal cation as cofactor.

Its subcellular location is the cytoplasm. It catalyses the reaction NAD(+) + ATP = ADP + NADP(+) + H(+). Involved in the regulation of the intracellular balance of NAD and NADP, and is a key enzyme in the biosynthesis of NADP. Catalyzes specifically the phosphorylation on 2'-hydroxyl of the adenosine moiety of NAD to yield NADP. The sequence is that of NAD kinase from Salmonella choleraesuis (strain SC-B67).